The primary structure comprises 115 residues: Pancreatic progenitor cell differentiation and proliferation factor B (115 aa).

The interval 21–48 (IGSTSSSSSCGSSEYSGEVIPHHPGLPK) is disordered. Low complexity predominate over residues 22–37 (GSTSSSSSCGSSEYSG).

Belongs to the PPDPF family.

In terms of biological role, probable regulator of exocrine pancreas development. The polypeptide is Pancreatic progenitor cell differentiation and proliferation factor B (ppdpfb) (Danio rerio (Zebrafish)).